Here is a 199-residue protein sequence, read N- to C-terminus: Peroxiredoxin 2 (199 aa).

Positions 8–166 constitute a Thioredoxin domain; that stretch reads AFIGQPAPNF…TLRLIQAFQF (159 aa). Catalysis depends on Cys-53, which acts as the Cysteine sulfenic acid (-SOH) intermediate.

It belongs to the peroxiredoxin family. AhpC/Prx1 subfamily. Homodimer; disulfide-linked, upon oxidation.

It carries out the reaction a hydroperoxide + [thioredoxin]-dithiol = an alcohol + [thioredoxin]-disulfide + H2O. In terms of biological role, thiol-specific peroxidase that catalyzes the reduction of hydrogen peroxide and organic hydroperoxides to water and alcohols, respectively. Plays a role in cell protection against oxidative stress by detoxifying peroxides and as sensor of hydrogen peroxide-mediated signaling events. In Brugia malayi (Filarial nematode worm), this protein is Peroxiredoxin 2 (tsa-2).